Here is a 287-residue protein sequence, read N- to C-terminus: Eukaryotic translation initiation factor 3 subunit F (287 aa).

Residues 12–142 form the MPN domain; the sequence is VRVHPVVLFQ…IKAYVCVSLG (131 aa).

The protein belongs to the eIF-3 subunit F family. In terms of assembly, component of the eukaryotic translation initiation factor 3 (eIF-3) complex.

The protein localises to the cytoplasm. Component of the eukaryotic translation initiation factor 3 (eIF-3) complex, which is involved in protein synthesis of a specialized repertoire of mRNAs and, together with other initiation factors, stimulates binding of mRNA and methionyl-tRNAi to the 40S ribosome. The eIF-3 complex specifically targets and initiates translation of a subset of mRNAs involved in cell proliferation. The chain is Eukaryotic translation initiation factor 3 subunit F from Culex quinquefasciatus (Southern house mosquito).